Consider the following 354-residue polypeptide: Biotin synthase (354 aa).

Residues 64–282 (GDVELATLLS…IAVARITMPR (219 aa)) enclose the Radical SAM core domain. [4Fe-4S] cluster contacts are provided by Cys79, Cys83, and Cys86. The [2Fe-2S] cluster site is built by Cys123, Cys154, Cys214, and Arg286.

It belongs to the radical SAM superfamily. Biotin synthase family. As to quaternary structure, homodimer. The cofactor is [4Fe-4S] cluster. Requires [2Fe-2S] cluster as cofactor.

The enzyme catalyses (4R,5S)-dethiobiotin + (sulfur carrier)-SH + 2 reduced [2Fe-2S]-[ferredoxin] + 2 S-adenosyl-L-methionine = (sulfur carrier)-H + biotin + 2 5'-deoxyadenosine + 2 L-methionine + 2 oxidized [2Fe-2S]-[ferredoxin]. Its pathway is cofactor biosynthesis; biotin biosynthesis; biotin from 7,8-diaminononanoate: step 2/2. Its function is as follows. Catalyzes the conversion of dethiobiotin (DTB) to biotin by the insertion of a sulfur atom into dethiobiotin via a radical-based mechanism. This is Biotin synthase from Paracidovorax citrulli (strain AAC00-1) (Acidovorax citrulli).